A 365-amino-acid polypeptide reads, in one-letter code: Succinate--CoA ligase [ADP-forming] subunit beta (365 aa).

The 222-residue stretch at 9 to 230 folds into the ATP-grasp domain; the sequence is KEIFRAEGIS…EMEEYEPEEF (222 aa). Residues Lys-45, 52–54, Glu-90, Ile-93, and Glu-98 contribute to the ATP site; that span reads GRG. Asn-190 and Asp-203 together coordinate Mg(2+). Substrate-binding positions include Asn-244 and 300–302; that span reads GIT.

The protein belongs to the succinate/malate CoA ligase beta subunit family. Heterotetramer of two alpha and two beta subunits. The cofactor is Mg(2+).

The catalysed reaction is succinate + ATP + CoA = succinyl-CoA + ADP + phosphate. It carries out the reaction GTP + succinate + CoA = succinyl-CoA + GDP + phosphate. It participates in carbohydrate metabolism; tricarboxylic acid cycle; succinate from succinyl-CoA (ligase route): step 1/1. Its function is as follows. Succinyl-CoA synthetase functions in the citric acid cycle (TCA), coupling the hydrolysis of succinyl-CoA to the synthesis of either ATP or GTP and thus represents the only step of substrate-level phosphorylation in the TCA. The beta subunit provides nucleotide specificity of the enzyme and binds the substrate succinate, while the binding sites for coenzyme A and phosphate are found in the alpha subunit. The polypeptide is Succinate--CoA ligase [ADP-forming] subunit beta (Methanothermobacter thermautotrophicus (strain ATCC 29096 / DSM 1053 / JCM 10044 / NBRC 100330 / Delta H) (Methanobacterium thermoautotrophicum)).